A 99-amino-acid polypeptide reads, in one-letter code: NADH-ubiquinone oxidoreductase chain 4L (99 aa).

3 helical membrane-spanning segments follow: residues Tyr-2–Leu-22, Leu-27–Ile-47, and Val-59–Met-79.

The protein belongs to the complex I subunit 4L family.

The protein localises to the mitochondrion membrane. It carries out the reaction a ubiquinone + NADH + 5 H(+)(in) = a ubiquinol + NAD(+) + 4 H(+)(out). Functionally, core subunit of the mitochondrial membrane respiratory chain NADH dehydrogenase (Complex I) that is believed to belong to the minimal assembly required for catalysis. Complex I functions in the transfer of electrons from NADH to the respiratory chain. The immediate electron acceptor for the enzyme is believed to be ubiquinone. The sequence is that of NADH-ubiquinone oxidoreductase chain 4L (ND4L) from Metridium senile (Brown sea anemone).